The primary structure comprises 339 residues: Protein H339R (339 aa).

Belongs to the asfivirus H339R family. In terms of assembly, interacts with host NACA (alpha chain of nascent polypeptide-associated complex).

Its subcellular location is the host cytoplasm. The protein resides in the host nucleus. In African swine fever virus (isolate Tick/Malawi/Lil 20-1/1983) (ASFV), this protein is Protein H339R.